The chain runs to 352 residues: Photosystem II D2 protein (352 aa).

Residues 40–60 (CAYLALGGWLTGTTFVTSWYT) traverse the membrane as a helical segment. Position 117 (H117) interacts with chlorophyll a. The helical transmembrane segment at 124-140 (GFMLRQFEIARLVGVRP) threads the bilayer. Pheophytin a-binding residues include Q129 and N142. Residues 152 to 165 (VFVSVFLIYPLGQS) traverse the membrane as a helical segment. H197 contacts chlorophyll a. A helical transmembrane segment spans residues 207 to 227 (GALLCAIHGATVENTLYKDGE). The a plastoquinone site is built by H214 and F261. Residue H214 participates in Fe cation binding. H268 provides a ligand contact to Fe cation. A helical transmembrane segment spans residues 278–294 (GLWMSSIGVVGLALNLR).

The protein belongs to the reaction center PufL/M/PsbA/D family. As to quaternary structure, PSII is composed of 1 copy each of membrane proteins PsbA, PsbB, PsbC, PsbD, PsbE, PsbF, PsbH, PsbI, PsbJ, PsbK, PsbL, PsbM, PsbT, PsbX, PsbY, PsbZ, Psb30/Ycf12, peripheral proteins PsbO, CyanoQ (PsbQ), PsbU, PsbV and a large number of cofactors. It forms dimeric complexes. Requires The D1/D2 heterodimer binds P680, chlorophylls that are the primary electron donor of PSII, and subsequent electron acceptors. It shares a non-heme iron and each subunit binds pheophytin, quinone, additional chlorophylls, carotenoids and lipids. There is also a Cl(-1) ion associated with D1 and D2, which is required for oxygen evolution. The PSII complex binds additional chlorophylls, carotenoids and specific lipids. as cofactor.

Its subcellular location is the cellular thylakoid membrane. It catalyses the reaction 2 a plastoquinone + 4 hnu + 2 H2O = 2 a plastoquinol + O2. Functionally, photosystem II (PSII) is a light-driven water:plastoquinone oxidoreductase that uses light energy to abstract electrons from H(2)O, generating O(2) and a proton gradient subsequently used for ATP formation. It consists of a core antenna complex that captures photons, and an electron transfer chain that converts photonic excitation into a charge separation. The D1/D2 (PsbA/PsbD) reaction center heterodimer binds P680, the primary electron donor of PSII as well as several subsequent electron acceptors. D2 is needed for assembly of a stable PSII complex. The sequence is that of Photosystem II D2 protein from Synechococcus sp. (strain JA-3-3Ab) (Cyanobacteria bacterium Yellowstone A-Prime).